Here is a 301-residue protein sequence, read N- to C-terminus: Homoserine kinase (301 aa).

86-96 (PLARGLGSSAT) contacts ATP.

Belongs to the GHMP kinase family. Homoserine kinase subfamily.

The protein localises to the cytoplasm. It catalyses the reaction L-homoserine + ATP = O-phospho-L-homoserine + ADP + H(+). It functions in the pathway amino-acid biosynthesis; L-threonine biosynthesis; L-threonine from L-aspartate: step 4/5. Functionally, catalyzes the ATP-dependent phosphorylation of L-homoserine to L-homoserine phosphate. This chain is Homoserine kinase, found in Thermosynechococcus vestitus (strain NIES-2133 / IAM M-273 / BP-1).